The primary structure comprises 291 residues: 33 kDa chaperonin (291 aa).

Cystine bridges form between cysteine 237-cysteine 239 and cysteine 270-cysteine 273.

The protein belongs to the HSP33 family. Under oxidizing conditions two disulfide bonds are formed involving the reactive cysteines. Under reducing conditions zinc is bound to the reactive cysteines and the protein is inactive.

The protein localises to the cytoplasm. Its function is as follows. Redox regulated molecular chaperone. Protects both thermally unfolding and oxidatively damaged proteins from irreversible aggregation. Plays an important role in the bacterial defense system toward oxidative stress. In Bacillus cereus (strain G9842), this protein is 33 kDa chaperonin.